The chain runs to 682 residues: Glutamine--fructose-6-phosphate aminotransferase [isomerizing] 2 (682 aa).

Cys-2 acts as the For GATase activity in catalysis. Residues Cys-2 to Gly-288 form the Glutamine amidotransferase type-2 domain. Ser-244 bears the Phosphoserine mark. SIS domains lie at His-360–Ser-499 and Leu-531–Pro-672. Substrate-binding positions include Thr-377–Ser-378, Ser-422–Ser-424, Thr-427, and His-578.

As to expression, highest levels of expression in heart, placenta, and spinal cord.

The enzyme catalyses D-fructose 6-phosphate + L-glutamine = D-glucosamine 6-phosphate + L-glutamate. Its pathway is nucleotide-sugar biosynthesis; UDP-N-acetyl-alpha-D-glucosamine biosynthesis; alpha-D-glucosamine 6-phosphate from D-fructose 6-phosphate: step 1/1. Its function is as follows. Controls the flux of glucose into the hexosamine pathway. Most likely involved in regulating the availability of precursors for N- and O-linked glycosylation of proteins. This Homo sapiens (Human) protein is Glutamine--fructose-6-phosphate aminotransferase [isomerizing] 2 (GFPT2).